Reading from the N-terminus, the 368-residue chain is Ankyrin repeat domain-containing protein 40 (368 aa).

The residue at position 1 (methionine 1) is an N-acetylmethionine. ANK repeat units follow at residues 9–38 and 43–72; these read EQQERLREAAALGDIREVQKLVESGVDVNS and NGWTCLHWACKRNHGQVVSYLLKSGADKEI. 3 disordered regions span residues 93–115, 139–176, and 196–238; these read MGVEEEDDDDDDDDNLPQLKKES, DSAQMQNGGPSTPPASPPADGSPPLLPPGEPPLLGTFP, and ILRT…NGTY. Acidic residues predominate over residues 95-107; the sequence is VEEEDDDDDDDDN. A compositionally biased stretch (pro residues) spans 149 to 169; it reads STPPASPPADGSPPLLPPGEP. Residues 212–224 show a composition bias toward polar residues; the sequence is PVSQSRSLFSSVP.

The sequence is that of Ankyrin repeat domain-containing protein 40 (ANKRD40) from Homo sapiens (Human).